Reading from the N-terminus, the 310-residue chain is Aspartate carbamoyltransferase catalytic subunit (310 aa).

Carbamoyl phosphate contacts are provided by arginine 55 and threonine 56. Lysine 85 lines the L-aspartate pocket. Residues arginine 106, histidine 135, and glutamine 138 each contribute to the carbamoyl phosphate site. Arginine 168 and arginine 230 together coordinate L-aspartate. Carbamoyl phosphate is bound by residues leucine 268 and proline 269.

It belongs to the aspartate/ornithine carbamoyltransferase superfamily. ATCase family. Heterododecamer (2C3:3R2) of six catalytic PyrB chains organized as two trimers (C3), and six regulatory PyrI chains organized as three dimers (R2).

It carries out the reaction carbamoyl phosphate + L-aspartate = N-carbamoyl-L-aspartate + phosphate + H(+). It functions in the pathway pyrimidine metabolism; UMP biosynthesis via de novo pathway; (S)-dihydroorotate from bicarbonate: step 2/3. Catalyzes the condensation of carbamoyl phosphate and aspartate to form carbamoyl aspartate and inorganic phosphate, the committed step in the de novo pyrimidine nucleotide biosynthesis pathway. This is Aspartate carbamoyltransferase catalytic subunit from Buchnera aphidicola subsp. Acyrthosiphon pisum (strain APS) (Acyrthosiphon pisum symbiotic bacterium).